A 338-amino-acid chain; its full sequence is MTKQKVAILGPGSWGTALSQVLNDNGHDVRLWGNIPDQIEEINTKHTNRHYFKDIVLDKNITATLDLGQALSDVDAVLFVVPTKVTRLVARQVAAILDHKVVVMHASKGLEPETHERLSTILEEVIPAHFRSEVVVVSGPSHAEETIVRDITLITAASKDIEAAKYVQSLFSNHYFRLYTNTDVIGVETAGALKNIIAVGAGALHGLGYGDNAKAAVITRGLAEITRLGVKLGADPLTYSGLSGVGDLIVTGTSVHSRNWRAGAALGRGEKLEDIERNMGMVIEGIATTKVAYEIAQDLGVYMPITTAIYKSIYEGADIKESILGMMSNEFRSENEWH.

NADPH contacts are provided by serine 13, tryptophan 14, and lysine 108. Residues lysine 108, glycine 139, and serine 141 each coordinate sn-glycerol 3-phosphate. NADPH is bound at residue alanine 143. The sn-glycerol 3-phosphate site is built by lysine 194, aspartate 247, serine 257, arginine 258, and asparagine 259. The Proton acceptor role is filled by lysine 194. Arginine 258 serves as a coordination point for NADPH. The NADPH site is built by valine 282 and glutamate 284.

The protein resides in the cytoplasm. The catalysed reaction is sn-glycerol 3-phosphate + NAD(+) = dihydroxyacetone phosphate + NADH + H(+). The enzyme catalyses sn-glycerol 3-phosphate + NADP(+) = dihydroxyacetone phosphate + NADPH + H(+). It functions in the pathway membrane lipid metabolism; glycerophospholipid metabolism. Its function is as follows. Catalyzes the reduction of the glycolytic intermediate dihydroxyacetone phosphate (DHAP) to sn-glycerol 3-phosphate (G3P), the key precursor for phospholipid synthesis. This chain is Glycerol-3-phosphate dehydrogenase [NAD(P)+], found in Streptococcus pyogenes serotype M6 (strain ATCC BAA-946 / MGAS10394).